A 301-amino-acid chain; its full sequence is Epimerase family protein Mb2239 (301 aa).

It belongs to the NAD(P)-dependent epimerase/dehydratase family. SDR39U1 subfamily.

This chain is Epimerase family protein Mb2239, found in Mycobacterium bovis (strain ATCC BAA-935 / AF2122/97).